We begin with the raw amino-acid sequence, 464 residues long: MSTAALVEGKIVQCIGAVIDVEFPRDSMPKIYDALILDGSELTLEVQQQLGDGVVRTICLGASDGLRRGLTVKNTAKPISVPVGKPTLGRIMDVLGRPIDEAGPIESEHTRSIHQKAPAFDELSPSTELLETGIKVIDLICPFAKGGKVGLFGGAGVGKTVNMMELINNIAKEHGGYSVFAGVGERTREGNDFYHEMKDSNVLDKVALVYGQMNEPPGNRLRVALTGLTMAEHFRDEGLDVLFFVDNIYRFTLAGTEVSALLGRMPSAVGYQPTLAEEMGKLQERITSTKKGSITSVQAVYVPADDLTDPSPATTFGHLDATVVLSRDIASLGIYPAVDPLDSTSRQIDPNVIGEEHYTITRRVQQTLQRYKELRDIIAILGMDELSPEDKLSVARARKIQRFLSQPFHVAEVFTGSPGKYVPLKETIRGFKMIVDGECDHLPEQAFYMVGTIDEAFEKAKKIQ.

ATP is bound at residue Gly-153–Thr-160.

The protein belongs to the ATPase alpha/beta chains family. In terms of assembly, F-type ATPases have 2 components, CF(1) - the catalytic core - and CF(0) - the membrane proton channel. CF(1) has five subunits: alpha(3), beta(3), gamma(1), delta(1), epsilon(1). CF(0) has three main subunits: a(1), b(2) and c(9-12). The alpha and beta chains form an alternating ring which encloses part of the gamma chain. CF(1) is attached to CF(0) by a central stalk formed by the gamma and epsilon chains, while a peripheral stalk is formed by the delta and b chains.

The protein localises to the cell inner membrane. It carries out the reaction ATP + H2O + 4 H(+)(in) = ADP + phosphate + 5 H(+)(out). Its function is as follows. Produces ATP from ADP in the presence of a proton gradient across the membrane. The catalytic sites are hosted primarily by the beta subunits. In Burkholderia vietnamiensis (strain G4 / LMG 22486) (Burkholderia cepacia (strain R1808)), this protein is ATP synthase subunit beta.